The primary structure comprises 343 residues: N-acetyl-gamma-glutamyl-phosphate reductase (343 aa).

The active site involves Cys-147.

The protein belongs to the NAGSA dehydrogenase family. Type 1 subfamily.

It is found in the cytoplasm. The enzyme catalyses N-acetyl-L-glutamate 5-semialdehyde + phosphate + NADP(+) = N-acetyl-L-glutamyl 5-phosphate + NADPH + H(+). It participates in amino-acid biosynthesis; L-arginine biosynthesis; N(2)-acetyl-L-ornithine from L-glutamate: step 3/4. Catalyzes the NADPH-dependent reduction of N-acetyl-5-glutamyl phosphate to yield N-acetyl-L-glutamate 5-semialdehyde. This is N-acetyl-gamma-glutamyl-phosphate reductase from Listeria monocytogenes serotype 4b (strain F2365).